The following is a 256-amino-acid chain: Hydroxyacylglutathione hydrolase (256 aa).

Zn(2+)-binding residues include H57, H59, D61, H62, H115, D134, and H172.

The protein belongs to the metallo-beta-lactamase superfamily. Glyoxalase II family. Monomer. Requires Zn(2+) as cofactor.

The enzyme catalyses an S-(2-hydroxyacyl)glutathione + H2O = a 2-hydroxy carboxylate + glutathione + H(+). The protein operates within secondary metabolite metabolism; methylglyoxal degradation; (R)-lactate from methylglyoxal: step 2/2. Its function is as follows. Thiolesterase that catalyzes the hydrolysis of S-D-lactoyl-glutathione to form glutathione and D-lactic acid. The protein is Hydroxyacylglutathione hydrolase of Rhodospirillum rubrum (strain ATCC 11170 / ATH 1.1.1 / DSM 467 / LMG 4362 / NCIMB 8255 / S1).